A 351-amino-acid polypeptide reads, in one-letter code: Ion-translocating oxidoreductase complex subunit D (351 aa).

The next 4 helical transmembrane spans lie at 18 to 38 (IMLL…YFFG), 40 to 60 (GSLI…GAVL), 87 to 107 (LPPL…IVIA), and 121 to 141 (PAMV…TSWL). Residue T185 is modified to FMN phosphoryl threonine. 5 consecutive transmembrane segments (helical) span residues 211 to 231 (VLAG…GLLL), 241 to 261 (IPVS…MIAP), 264 to 284 (FASP…FFIA), 298 to 318 (LIFG…GGYP), and 321 to 341 (VAFA…YTQP).

Belongs to the NqrB/RnfD family. The complex is composed of six subunits: RnfA, RnfB, RnfC, RnfD, RnfE and RnfG. The cofactor is FMN.

It is found in the cell inner membrane. Functionally, part of a membrane-bound complex that couples electron transfer with translocation of ions across the membrane. In Yersinia pestis, this protein is Ion-translocating oxidoreductase complex subunit D.